The sequence spans 171 residues: Nicotinamide-nucleotide adenylyltransferase (171 aa).

Belongs to the archaeal NMN adenylyltransferase family.

The protein localises to the cytoplasm. It catalyses the reaction beta-nicotinamide D-ribonucleotide + ATP + H(+) = diphosphate + NAD(+). It participates in cofactor biosynthesis; NAD(+) biosynthesis; NAD(+) from nicotinamide D-ribonucleotide: step 1/1. This chain is Nicotinamide-nucleotide adenylyltransferase, found in Methanococcus maripaludis (strain C5 / ATCC BAA-1333).